Consider the following 600-residue polypeptide: Albumin (600 aa).

An N-terminal signal peptide occupies residues 1–10; the sequence is LLFLFSSAYS. Positions 11 to 16 are excised as a propeptide; it reads RGVFRR. Albumin domains follow at residues 11 to 202, 203 to 395, and 396 to 593; these read RGVF…DELR, DEGK…EFQP, and LVEE…KFVA. Residue histidine 19 participates in Cu cation binding. Serine 21 is modified (phosphoserine). Ca(2+) contacts are provided by glutamate 22 and aspartate 29. Cysteine 69 and cysteine 78 are joined by a disulfide. Residues serine 74 and serine 81 each carry the phosphoserine modification. Residue histidine 83 coordinates Zn(2+). 6 disulfide bridges follow: cysteine 91–cysteine 107, cysteine 106–cysteine 117, cysteine 140–cysteine 185, cysteine 184–cysteine 193, cysteine 216–cysteine 262, and cysteine 261–cysteine 269. Threonine 99 carries the post-translational modification Phosphothreonine. An N6-succinyllysine modification is found at lysine 221. Lysine 256 contacts (4Z,15Z)-bilirubin IXalpha. Position 260 (glutamate 260) interacts with Ca(2+). 2 residues coordinate Zn(2+): histidine 263 and aspartate 265. Aspartate 265, glutamate 268, aspartate 271, and aspartate 275 together coordinate Ca(2+). Intrachain disulfides connect cysteine 281–cysteine 295, cysteine 294–cysteine 305, cysteine 332–cysteine 377, cysteine 376–cysteine 385, cysteine 408–cysteine 454, cysteine 453–cysteine 464, cysteine 477–cysteine 493, and cysteine 492–cysteine 503. Serine 289 bears the Phosphoserine mark. Serine 435 is subject to Phosphoserine. Phosphothreonine is present on residues threonine 436 and threonine 438. An N6-succinyllysine modification is found at lysine 452. Serine 505 is modified (phosphoserine). Disulfide bonds link cysteine 530–cysteine 575 and cysteine 574–cysteine 583. Lysine 535 carries the post-translational modification N6-succinyllysine. The residue at position 550 (lysine 550) is an N6-methyllysine. Lysine 580 is subject to N6-succinyllysine.

The protein belongs to the ALB/AFP/VDB family. Interacts with FCGRT; this interaction regulates ALB homeostasis. Interacts with TASOR. In plasma, occurs in a covalently-linked complex with chromophore-bound alpha-1-microglobulin; this interaction does not prevent fatty acid binding to ALB. Phosphorylated by FAM20C in the extracellular medium. As to expression, plasma.

It localises to the secreted. Binds water, Ca(2+), Na(+), K(+), fatty acids, hormones, bilirubin and drugs. Its main function is the regulation of the colloidal osmotic pressure of blood. Major zinc transporter in plasma, typically binds about 80% of all plasma zinc. Major calcium and magnesium transporter in plasma, binds approximately 45% of circulating calcium and magnesium in plasma. Potentially has more than two calcium-binding sites and might additionally bind calcium in a non-specific manner. The shared binding site between zinc and calcium at residue Asp-265 suggests a crosstalk between zinc and calcium transport in the blood. The rank order of affinity is zinc &gt; calcium &gt; magnesium. Binds to the bacterial siderophore enterobactin and inhibits enterobactin-mediated iron uptake of E.coli from ferric transferrin, and may thereby limit the utilization of iron and growth of enteric bacteria such as E.coli. Does not prevent iron uptake by the bacterial siderophore aerobactin. In Macaca mulatta (Rhesus macaque), this protein is Albumin (ALB).